The primary structure comprises 770 residues: Metabotropic glutamate receptor-like protein F (770 aa).

A signal peptide spans 1 to 22; sequence MKIKNFIYFLIYFIFLFKVING. Over 23 to 370 the chain is Extracellular; sequence QNKTCKISVL…STVDYPESLK (348 aa). Residues asparagine 24, asparagine 185, asparagine 260, asparagine 286, asparagine 319, and asparagine 344 are each glycosylated (N-linked (GlcNAc...) asparagine). Residues 371 to 391 form a helical membrane-spanning segment; sequence IGVTVVSGFCIFLCLISMIIV. Residues 392 to 405 lie on the Cytoplasmic side of the membrane; it reads IKFKEAKVIKSSSP. Residues 406–426 traverse the membrane as a helical segment; it reads IFCLLILFGCIVIFVGCIMFA. At 427 to 442 the chain is on the extracellular side; the sequence is RSPTDGSCRSRVWLLS. A helical membrane pass occupies residues 443–463; it reads LGYTIFLGNLMVKNWRIWLLF. At 464–483 the chain is on the cytoplasmic side; sequence DNPKLKKRAITNWKLYPWVS. Residues 484-504 traverse the membrane as a helical segment; sequence GIVIIDIVILSIWQALGDIVA. Over 505 to 528 the chain is Extracellular; that stretch reads ESRTGIDSLTKYEYRNVCASSDQG. Residues 529–549 traverse the membrane as a helical segment; the sequence is SIALYLLLVFHGLILLVACFI. The Cytoplasmic portion of the chain corresponds to 550–565; that stretch reads SFKIKVVDIEEFNESK. Residues 566-586 traverse the membrane as a helical segment; the sequence is PITTSVYIITFCLFIVIPIMV. Topologically, residues 587-594 are extracellular; that stretch reads SSPTVTTQ. A helical membrane pass occupies residues 595–615; that stretch reads TTIICICALITTMLSIILLFG. The Cytoplasmic portion of the chain corresponds to 616–770; that stretch reads TKFFKMITVG…GQTEIDSNDV (155 aa). The segment at 639–740 is disordered; that stretch reads SSHSQRTKSS…EEKQKDEEEI (102 aa). 2 stretches are compositionally biased toward basic and acidic residues: residues 676–693 and 730–740; these read SSEK…KDHM and NEEKQKDEEEI. Positions 715-760 form a coiled coil; that stretch reads REQINDNIILENNNDNEEKQKDEEEIKEEKLLVSEIQAKRLSLEQN.

In the N-terminal section; belongs to the BMP lipoprotein family. The protein in the C-terminal section; belongs to the G-protein coupled receptor 3 family. GABA-B receptor subfamily.

The protein localises to the membrane. This is Metabotropic glutamate receptor-like protein F (grlF) from Dictyostelium discoideum (Social amoeba).